Here is a 237-residue protein sequence, read N- to C-terminus: 2-C-methyl-D-erythritol 4-phosphate cytidylyltransferase (237 aa).

This sequence belongs to the IspD/TarI cytidylyltransferase family. IspD subfamily.

The catalysed reaction is 2-C-methyl-D-erythritol 4-phosphate + CTP + H(+) = 4-CDP-2-C-methyl-D-erythritol + diphosphate. It participates in isoprenoid biosynthesis; isopentenyl diphosphate biosynthesis via DXP pathway; isopentenyl diphosphate from 1-deoxy-D-xylulose 5-phosphate: step 2/6. Its function is as follows. Catalyzes the formation of 4-diphosphocytidyl-2-C-methyl-D-erythritol from CTP and 2-C-methyl-D-erythritol 4-phosphate (MEP). This chain is 2-C-methyl-D-erythritol 4-phosphate cytidylyltransferase, found in Acaryochloris marina (strain MBIC 11017).